A 229-amino-acid polypeptide reads, in one-letter code: Putative germin-like protein 12-3 (229 aa).

A signal peptide spans 1–22 (MASSNFFLLIPLIALVTTQAMA). C32 and C47 form a disulfide bridge. One can recognise a Cupin type-1 domain in the interval 62–217 (ANLDKPMDIT…AFQVDKKAVD (156 aa)). N78 carries N-linked (GlcNAc...) asparagine glycosylation. Mn(2+) is bound by residues H111, H113, E118, and H162.

Belongs to the germin family. In terms of assembly, oligomer (believed to be a pentamer but probably hexamer).

It localises to the secreted. Its subcellular location is the extracellular space. The protein localises to the apoplast. Its function is as follows. May play a role in plant defense. Probably has no oxalate oxidase activity even if the active site is conserved. In Oryza sativa subsp. japonica (Rice), this protein is Putative germin-like protein 12-3.